Here is a 694-residue protein sequence, read N- to C-terminus: DNA polymerase eta (694 aa).

The UmuC domain occupies 9-258 (VALVDMDCFF…MPIRKIRSLG (250 aa)). Mg(2+)-binding residues include aspartate 13 and methionine 14. Aspartate 13 and methionine 14 together coordinate Mn(2+). Residue arginine 61 participates in a 2'-deoxyribonucleoside 5'-triphosphate binding. Mg(2+) contacts are provided by aspartate 115 and glutamate 116. The Mn(2+) site is built by aspartate 115 and glutamate 116. Glutamate 116 is a catalytic residue. The disordered stretch occupies residues 565 to 598 (DSGPDDGAVKPVSSKAVSTEMNVAGDSPNVLDSP). The UBZ3-type zinc finger occupies 609 to 643 (ATEDQVLCEKCDSLVPVWDMPEHTDYHFALELQKS). Residues cysteine 616, cysteine 619, histidine 631, and histidine 635 each contribute to the Zn(2+) site. A disordered region spans residues 651–694 (KPQAIPAVSPQGKRNPKSPSASSSKRLRPHGMQTLESFFKPLTH). Glycyl lysine isopeptide (Lys-Gly) (interchain with G-Cter in ubiquitin) cross-links involve residues lysine 663, lysine 667, and lysine 675. Positions 682 to 689 (MQTLESFF) match the PIP-box motif. Lysine 690 participates in a covalent cross-link: Glycyl lysine isopeptide (Lys-Gly) (interchain with G-Cter in ubiquitin).

The protein belongs to the DNA polymerase type-Y family. Interacts with REV1. Interacts with monoubiquitinated PCNA, but not unmodified PCNA. Interacts with POLI; this interaction targets POLI to the replication machinery. Interacts with PALB2 and BRCA2; the interactions are direct and are required to sustain the recruitment of POLH at blocked replication forks and to stimulate POLH-dependent DNA synthesis on D loop substrates. Interacts (via C-terminus) with TRAIP. Interacts with ubiquitin. Interacts with POLDIP2. Mg(2+) serves as cofactor. Mn(2+) is required as a cofactor. Post-translationally, monoubiquitinated by RCHY1/PIRH2. Ubiquitination depends on integrity of the UBZ3-type zinc finger domain and is enhanced by TRAIP. Ubiquitination inhibits the ability of PolH to interact with PCNA and to bypass UV-induced lesions. In terms of tissue distribution, ubiquitous.

It localises to the nucleus. The catalysed reaction is DNA(n) + a 2'-deoxyribonucleoside 5'-triphosphate = DNA(n+1) + diphosphate. Its activity is regulated as follows. The enzyme in complex with the DNA substrate binds a third divalent metal cation. The binding of this third divalent cation, which is coordinated by water molecules and two oxygen atoms from DNA and dNTP, is essential for catalyzing the DNA synthesis. DNA polymerase specifically involved in the DNA repair by translesion synthesis (TLS). Due to low processivity on both damaged and normal DNA, cooperates with the heterotetrameric (REV3L, REV7, POLD2 and POLD3) POLZ complex for complete bypass of DNA lesions. Inserts one or 2 nucleotide(s) opposite the lesion, the primer is further extended by the tetrameric POLZ complex. In the case of 1,2-intrastrand d(GpG)-cisplatin cross-link, inserts dCTP opposite the 3' guanine. Particularly important for the repair of UV-induced pyrimidine dimers. Although inserts the correct base, may cause base transitions and transversions depending upon the context. May play a role in hypermutation at immunoglobulin genes. Forms a Schiff base with 5'-deoxyribose phosphate at abasic sites, but does not have any lyase activity, preventing the release of the 5'-deoxyribose phosphate (5'-dRP) residue. This covalent trapping of the enzyme by the 5'-dRP residue inhibits its DNA synthetic activity during base excision repair, thereby avoiding high incidence of mutagenesis. Targets POLI to replication foci. This chain is DNA polymerase eta (Polh), found in Mus musculus (Mouse).